Here is a 149-residue protein sequence, read N- to C-terminus: Transthyretin (149 aa).

The signal sequence occupies residues 1–22 (MAFHSLLLLCLAGLAFVSETAA). Residue C32 is modified to Sulfocysteine. K37 is a binding site for L-thyroxine. 4-carboxyglutamate is present on E64. L-thyroxine-binding residues include E76 and S139.

Belongs to the transthyretin family. As to quaternary structure, homotetramer. Dimer of dimers. In the homotetramer, subunits assemble around a central channel that can accommodate two ligand molecules. Interacts with RBP4. Sulfonation of the reactive cysteine Cys-32 enhances the stability of the native conformation of TTR, avoiding misassembly of the protein leading to amyloid formation. In terms of tissue distribution, detected in liver.

The protein localises to the secreted. Its function is as follows. Thyroid hormone-binding protein. Probably transports thyroxine from the bloodstream to the brain. The protein is Transthyretin (TTR) of Macropus giganteus (Eastern gray kangaroo).